The sequence spans 721 residues: BBSome complex member bbs-7 (721 aa).

As to quaternary structure, part of BBSome complex, that contains at least bbs-1, bbs-2, bbs-4, bbs-5, osm-12, bbs-8/ttc-8 and bbs-9. Interacts with bbs-1. As to expression, expressed in ciliated cells including amphid and both inner and outer labial neurons of the head and in both phasmid neurons PHA and PHB in the tail at larval stages L1 and L2.

The protein resides in the cell projection. It is found in the cilium. It localises to the cytoplasm. Its subcellular location is the cytoskeleton. The protein localises to the cilium basal body. The protein resides in the cilium axoneme. Its function is as follows. Component of the BBSome complex. The BBSome complex is thought to function as a coat complex required for sorting of specific membrane proteins to the primary cilia. The BBSome complex is required for ciliogenesis but is dispensable for centriolar satellite function. Required for proper BBSome complex assembly and its ciliary localization. Required for cilia biogenesis and both the assembly and movement of intraflagellar transport proteins along the ciliary axoneme. Plays a role in the removal of degraded mechanosensory receptors within the cilia. Plays a role in guanylyl cyclase localization in the ring-like structures at the base of the finger compartment in AFD sensory neurons. In ciliated sensory neurons, required for the sensation of nitric oxide and avoidance of NO-producing organisms like P.aeruginosa. This chain is BBSome complex member bbs-7, found in Caenorhabditis elegans.